Reading from the N-terminus, the 329-residue chain is GTP 3',8-cyclase (329 aa).

Positions 8–234 (AFARKFYYLR…QLRQRSDGPA (227 aa)) constitute a Radical SAM core domain. Arg17 contacts GTP. Residues Cys24 and Cys28 each coordinate [4Fe-4S] cluster. Tyr30 is an S-adenosyl-L-methionine binding site. Cys31 contributes to the [4Fe-4S] cluster binding site. Arg68 provides a ligand contact to GTP. Gly72 contacts S-adenosyl-L-methionine. GTP is bound at residue Thr99. Ser123 contributes to the S-adenosyl-L-methionine binding site. Lys160 contributes to the GTP binding site. S-adenosyl-L-methionine is bound at residue Met194. Residues Cys257 and Cys260 each contribute to the [4Fe-4S] cluster site. 262-264 (RLR) provides a ligand contact to GTP. A [4Fe-4S] cluster-binding site is contributed by Cys274.

It belongs to the radical SAM superfamily. MoaA family. Monomer and homodimer. The cofactor is [4Fe-4S] cluster.

It catalyses the reaction GTP + AH2 + S-adenosyl-L-methionine = (8S)-3',8-cyclo-7,8-dihydroguanosine 5'-triphosphate + 5'-deoxyadenosine + L-methionine + A + H(+). Its pathway is cofactor biosynthesis; molybdopterin biosynthesis. Its function is as follows. Catalyzes the cyclization of GTP to (8S)-3',8-cyclo-7,8-dihydroguanosine 5'-triphosphate. The polypeptide is GTP 3',8-cyclase (Escherichia coli O7:K1 (strain IAI39 / ExPEC)).